The primary structure comprises 282 residues: HTH-type transcriptional activator RhaR (282 aa).

In terms of domain architecture, HTH araC/xylS-type spans 179 to 277; that stretch reads DKLITALAGS…GMTPVQWRHR (99 aa). 2 consecutive DNA-binding regions (H-T-H motif) follow at residues 196–217 and 244–267; these read EKFCEQEQCSERALRQQFRTQT and VSEVAMRCGFEDSNYFSVVFNREV.

In terms of assembly, binds DNA as a dimer.

It is found in the cytoplasm. Its function is as follows. Activates expression of the rhaSR operon in response to L-rhamnose. This is HTH-type transcriptional activator RhaR from Enterobacter sp. (strain 638).